The chain runs to 186 residues: ADP-ribosylation factor-like protein alp41 (186 aa).

A lipid anchor (N-myristoyl glycine) is attached at glycine 2. Residues 23 to 30, 66 to 70, and 125 to 128 contribute to the GTP site; these read GLDNAGKT, DIGGQ, and NKSD.

This sequence belongs to the small GTPase superfamily. Arf family.

It is found in the cytoplasm. The protein localises to the cytoskeleton. In terms of biological role, has a role in the cofactor-dependent pathway of microtubule biogenesis. Required for growth polarity control. The sequence is that of ADP-ribosylation factor-like protein alp41 (alp41) from Schizosaccharomyces pombe (strain 972 / ATCC 24843) (Fission yeast).